The sequence spans 363 residues: 3,4-dihydroxy-2-butanone 4-phosphate synthase (363 aa).

Positions 1-202 (MSHISPIPEI…IADLIEYRSR (202 aa)) are DHBP synthase. Residues 28–29 (RE), D33, 141–145 (RAGHT), and E165 each bind D-ribulose 5-phosphate. E29 provides a ligand contact to Mg(2+). H144 contributes to the Mg(2+) binding site. Residues 205–363 (SLLEDMGNAP…EVVGFEEAEK (159 aa)) form a GTP cyclohydrolase II-like region.

The protein in the N-terminal section; belongs to the DHBP synthase family. This sequence in the C-terminal section; belongs to the GTP cyclohydrolase II family. Mg(2+) serves as cofactor. Requires Mn(2+) as cofactor.

It carries out the reaction D-ribulose 5-phosphate = (2S)-2-hydroxy-3-oxobutyl phosphate + formate + H(+). It functions in the pathway cofactor biosynthesis; riboflavin biosynthesis; 2-hydroxy-3-oxobutyl phosphate from D-ribulose 5-phosphate: step 1/1. In terms of biological role, catalyzes the conversion of D-ribulose 5-phosphate to formate and 3,4-dihydroxy-2-butanone 4-phosphate. This is 3,4-dihydroxy-2-butanone 4-phosphate synthase (ribB) from Neisseria meningitidis serogroup B (strain ATCC BAA-335 / MC58).